Consider the following 842-residue polypeptide: Glycogen phosphorylase, muscle form (842 aa).

Serine 2 bears the N-acetylserine mark. The residue at position 15 (serine 15) is a Phosphoserine; by PHK; in form phosphorylase A. Positions 43 and 76 each coordinate AMP. Tyrosine 204 and tyrosine 227 each carry phosphotyrosine. Residue 310-319 (RRFKSSKFGS) coordinates AMP. Residue serine 430 is modified to Phosphoserine. A Phosphotyrosine modification is found at tyrosine 473. Phosphoserine is present on serine 514. At lysine 681 the chain carries N6-(pyridoxal phosphate)lysine. Serine 747 and serine 748 each carry phosphoserine.

The protein belongs to the glycogen phosphorylase family. Homodimer. Homotetramer; to form the enzymatically active phosphorylase A. It depends on pyridoxal 5'-phosphate as a cofactor. Post-translationally, phosphorylation of Ser-15 converts phosphorylase B (unphosphorylated) to phosphorylase A.

It catalyses the reaction [(1-&gt;4)-alpha-D-glucosyl](n) + phosphate = [(1-&gt;4)-alpha-D-glucosyl](n-1) + alpha-D-glucose 1-phosphate. With respect to regulation, allosterically regulated through the non-covalent binding of metabolites, being activated by AMP and inhibited by ATP, ADP, and glucose-6-phosphate. The activity is also controlled by post-translational modifications including phosphorylation. Allosteric enzyme that catalyzes the rate-limiting step in glycogen catabolism, the phosphorolytic cleavage of glycogen to produce glucose-1-phosphate, and plays a central role in maintaining cellular and organismal glucose homeostasis. This chain is Glycogen phosphorylase, muscle form, found in Mus musculus (Mouse).